The sequence spans 608 residues: Glutamine--fructose-6-phosphate aminotransferase [isomerizing] (608 aa).

The Nucleophile; for GATase activity role is filled by Cys-2. The region spanning 2–217 is the Glutamine amidotransferase type-2 domain; sequence CGIVGIVGNQ…DGDWAVIGKT (216 aa). SIS domains lie at 281–422 and 456–598; these read ISDA…ARGT and LSRE…VDQP. The For Fru-6P isomerization activity role is filled by Lys-603.

Homodimer.

Its subcellular location is the cytoplasm. It carries out the reaction D-fructose 6-phosphate + L-glutamine = D-glucosamine 6-phosphate + L-glutamate. Functionally, catalyzes the first step in hexosamine metabolism, converting fructose-6P into glucosamine-6P using glutamine as a nitrogen source. This chain is Glutamine--fructose-6-phosphate aminotransferase [isomerizing], found in Rhizobium meliloti (strain 1021) (Ensifer meliloti).